The primary structure comprises 141 residues: METIGFHYVVEAAGCDPEILGNADKIRQIFLEAAKVGKMEVKASYFFKFSPTGVSGVVIVAESHISIHTWPEKGYAALDVYTCGTTADPEKAVDYILDKIKAQYAHVSEIKRGIEEDDETFTHMILTWEEKLERKNGDEKS.

The Schiff-base intermediate with substrate; via pyruvic acid role is filled by Ser63. Ser63 carries the pyruvic acid (Ser); by autocatalysis modification. Catalysis depends on His68, which acts as the Proton acceptor; for processing activity. Cys83 (proton donor; for catalytic activity) is an active-site residue.

It belongs to the prokaryotic AdoMetDC family. Type 1 subfamily. In terms of assembly, heterotetramer of two alpha and two beta chains arranged as a dimer of alpha/beta heterodimers. Requires pyruvate as cofactor. Is synthesized initially as an inactive proenzyme. Formation of the active enzyme involves a self-maturation process in which the active site pyruvoyl group is generated from an internal serine residue via an autocatalytic post-translational modification. Two non-identical subunits are generated from the proenzyme in this reaction, and the pyruvate is formed at the N-terminus of the alpha chain, which is derived from the carboxyl end of the proenzyme. The post-translation cleavage follows an unusual pathway, termed non-hydrolytic serinolysis, in which the side chain hydroxyl group of the serine supplies its oxygen atom to form the C-terminus of the beta chain, while the remainder of the serine residue undergoes an oxidative deamination to produce ammonia and the pyruvoyl group blocking the N-terminus of the alpha chain.

It carries out the reaction S-adenosyl-L-methionine + H(+) = S-adenosyl 3-(methylsulfanyl)propylamine + CO2. It participates in amine and polyamine biosynthesis; S-adenosylmethioninamine biosynthesis; S-adenosylmethioninamine from S-adenosyl-L-methionine: step 1/1. Functionally, catalyzes the decarboxylation of S-adenosylmethionine to S-adenosylmethioninamine (dcAdoMet), the propylamine donor required for the synthesis of the polyamines spermine and spermidine from the diamine putrescine. This Thermococcus onnurineus (strain NA1) protein is S-adenosylmethionine decarboxylase proenzyme.